The primary structure comprises 316 residues: Aspartate carbamoyltransferase catalytic subunit (316 aa).

Residues Arg-59 and Thr-60 each coordinate carbamoyl phosphate. Residue Lys-88 coordinates L-aspartate. Positions 109, 137, and 140 each coordinate carbamoyl phosphate. L-aspartate-binding residues include Arg-170 and Arg-232. 2 residues coordinate carbamoyl phosphate: Leu-269 and Pro-270.

The protein belongs to the aspartate/ornithine carbamoyltransferase superfamily. ATCase family. In terms of assembly, heterooligomer of catalytic and regulatory chains.

It catalyses the reaction carbamoyl phosphate + L-aspartate = N-carbamoyl-L-aspartate + phosphate + H(+). The protein operates within pyrimidine metabolism; UMP biosynthesis via de novo pathway; (S)-dihydroorotate from bicarbonate: step 2/3. In terms of biological role, catalyzes the condensation of carbamoyl phosphate and aspartate to form carbamoyl aspartate and inorganic phosphate, the committed step in the de novo pyrimidine nucleotide biosynthesis pathway. The sequence is that of Aspartate carbamoyltransferase catalytic subunit from Methanobrevibacter smithii (strain ATCC 35061 / DSM 861 / OCM 144 / PS).